Reading from the N-terminus, the 141-residue chain is Small ribosomal subunit protein uS8 (141 aa).

The protein belongs to the universal ribosomal protein uS8 family. In terms of assembly, part of the 30S ribosomal subunit. Contacts proteins S5 and S12.

Functionally, one of the primary rRNA binding proteins, it binds directly to 16S rRNA central domain where it helps coordinate assembly of the platform of the 30S subunit. The sequence is that of Small ribosomal subunit protein uS8 from Mycoplasma genitalium (strain ATCC 33530 / DSM 19775 / NCTC 10195 / G37) (Mycoplasmoides genitalium).